Consider the following 369-residue polypeptide: MTKNLYLGVMSGTSLDGVDLCVMDFAKNPPKLTACGFTPMPEDLRTDLSHLLKSRETSLQKLGEIDHRLGLLYAESIKRFLAEHHLSASDIQAIGCHGQTVWHSPNGNFPFTMQIGDMNLVAAHTGITTIADFRRKDMAVGGQGAPLVPAFHEGIFASQERLTVVLNIGGISNISVLTPQQPTIGYDVSVGNALMDSWIELHQAKRYDKNAEWAKTGKLIPTLLDSLLDEPFFKLPAPKSTGRELFNLEWLAKKSANLTAYRPEDVQRTLAEFTAQSVVNELKTLESEKQCLLLVCGGGARNPLLMQRFSELLPKWQVATTDEYGLDIDYVEAAAFAWLAYQRVHNLTSNLPSVTGAKQPVSLGVIYPK.

12–19 (GTSLDGVD) is a binding site for ATP.

The protein belongs to the anhydro-N-acetylmuramic acid kinase family.

It carries out the reaction 1,6-anhydro-N-acetyl-beta-muramate + ATP + H2O = N-acetyl-D-muramate 6-phosphate + ADP + H(+). Its pathway is amino-sugar metabolism; 1,6-anhydro-N-acetylmuramate degradation. The protein operates within cell wall biogenesis; peptidoglycan recycling. Functionally, catalyzes the specific phosphorylation of 1,6-anhydro-N-acetylmuramic acid (anhMurNAc) with the simultaneous cleavage of the 1,6-anhydro ring, generating MurNAc-6-P. Is required for the utilization of anhMurNAc either imported from the medium or derived from its own cell wall murein, and thus plays a role in cell wall recycling. The protein is Anhydro-N-acetylmuramic acid kinase of Actinobacillus pleuropneumoniae serotype 7 (strain AP76).